The chain runs to 547 residues: Glucose-6-phosphate isomerase (547 aa).

The active-site Proton donor is the Glu351. Active-site residues include His382 and Lys510.

Belongs to the GPI family.

Its subcellular location is the cytoplasm. It carries out the reaction alpha-D-glucose 6-phosphate = beta-D-fructose 6-phosphate. The protein operates within carbohydrate biosynthesis; gluconeogenesis. Its pathway is carbohydrate degradation; glycolysis; D-glyceraldehyde 3-phosphate and glycerone phosphate from D-glucose: step 2/4. Its function is as follows. Catalyzes the reversible isomerization of glucose-6-phosphate to fructose-6-phosphate. The sequence is that of Glucose-6-phosphate isomerase from Saccharophagus degradans (strain 2-40 / ATCC 43961 / DSM 17024).